A 329-amino-acid polypeptide reads, in one-letter code: Beta-ketoacyl-[acyl-carrier-protein] synthase III (329 aa).

Active-site residues include Cys-114 and His-255. The ACP-binding stretch occupies residues 256 to 260; it reads QANQR. Asn-285 is an active-site residue.

The protein belongs to the thiolase-like superfamily. FabH family. Homodimer.

It is found in the cytoplasm. The catalysed reaction is malonyl-[ACP] + acetyl-CoA + H(+) = 3-oxobutanoyl-[ACP] + CO2 + CoA. The protein operates within lipid metabolism; fatty acid biosynthesis. Catalyzes the condensation reaction of fatty acid synthesis by the addition to an acyl acceptor of two carbons from malonyl-ACP. Catalyzes the first condensation reaction which initiates fatty acid synthesis and may therefore play a role in governing the total rate of fatty acid production. Possesses both acetoacetyl-ACP synthase and acetyl transacylase activities. Its substrate specificity determines the biosynthesis of branched-chain and/or straight-chain of fatty acids. This is Beta-ketoacyl-[acyl-carrier-protein] synthase III from Thermosynechococcus vestitus (strain NIES-2133 / IAM M-273 / BP-1).